We begin with the raw amino-acid sequence, 761 residues long: Zinc finger protein 287 (761 aa).

Residues 49–131 (RQNFRNFPYP…TLVEDLTQIL (83 aa)) form the SCAN box domain. Residues 134-154 (EAPQNSTLSQDTPEEDPRGKH) are disordered. Residues 170–238 (MTFKDVAVDI…IKEILEGPSP (69 aa)) form the KRAB domain. 14 C2H2-type zinc fingers span residues 368-390 (YKCNVCGKKFRKYPSLLKHQSTH), 396-418 (YECEECGKEFRHISSLIAHQRMH), 424-446 (YECHQCGKAFSQRAHLTIHQRIH), 452-474 (YKCDDCGKDFSQRAHLTIHQRTH), 480-502 (YKCLECGKTFSHSSSLINHQRVH), 508-530 (YICNECGKTFSQSTHLLQHQKIH), 536-558 (YKCNECWKVFSQSTYLIRHQRIH), 564-586 (YKCNECGKAFAHSSTLIQHQTTH), 592-614 (YICNICGKAFSQSANLTQHHRTH), 620-642 (YKCSVCGKAFSQSVHLTQHQRIH), 648-670 (FKCNICGKAYRQGANLTQHQRIH), 676-698 (YKCNECGKAFIYSSSLNQHQRTH), 704-726 (YKCNECDKDFSQRTCLIQHQRIH), and 732-754 (YACRICGKTFTQSTNLIQHQRVH).

The protein belongs to the krueppel C2H2-type zinc-finger protein family.

It is found in the nucleus. Its function is as follows. May be involved in transcriptional regulation. The polypeptide is Zinc finger protein 287 (Homo sapiens (Human)).